The chain runs to 60 residues: Large ribosomal subunit protein bL32 (60 aa).

The protein belongs to the bacterial ribosomal protein bL32 family.

The chain is Large ribosomal subunit protein bL32 from Clostridium acetobutylicum (strain ATCC 824 / DSM 792 / JCM 1419 / IAM 19013 / LMG 5710 / NBRC 13948 / NRRL B-527 / VKM B-1787 / 2291 / W).